The following is a 150-amino-acid chain: UPF0178 protein ECA0873 (150 aa).

It belongs to the UPF0178 family.

This is UPF0178 protein ECA0873 from Pectobacterium atrosepticum (strain SCRI 1043 / ATCC BAA-672) (Erwinia carotovora subsp. atroseptica).